The chain runs to 464 residues: UDP-N-acetylmuramate--L-alanine ligase (464 aa).

An ATP-binding site is contributed by 118-124 (GTHGKTT).

The protein belongs to the MurCDEF family.

It is found in the cytoplasm. It catalyses the reaction UDP-N-acetyl-alpha-D-muramate + L-alanine + ATP = UDP-N-acetyl-alpha-D-muramoyl-L-alanine + ADP + phosphate + H(+). The protein operates within cell wall biogenesis; peptidoglycan biosynthesis. Functionally, cell wall formation. The protein is UDP-N-acetylmuramate--L-alanine ligase of Dinoroseobacter shibae (strain DSM 16493 / NCIMB 14021 / DFL 12).